Here is a 192-residue protein sequence, read N- to C-terminus: MKDELFLRGENVPMTKEAVRALALSKLELHRASHLIDVGAGTGSVSIEAALQFPSLQVTAIERNPAALRLLDENRQRFACGNIDILPGEAPMTITGKADAVFMGGSGGHLTALIDWAMGHLHPGGRLVMTFILQENLHSALAHLVHIGACRMDCVQLQLSSLTPLGAGHYFKPNNPVFVIACQKEENHVRDI.

S-adenosyl-L-methionine contacts are provided by residues Thr-15, Gly-39–Gly-43, Glu-62, and Ala-90.

This sequence belongs to the methyltransferase superfamily. Bacterial-type CbiT family.

It carries out the reaction Co-precorrin-6B + S-adenosyl-L-methionine = Co-precorrin-7 + S-adenosyl-L-homocysteine + CO2. The protein operates within cofactor biosynthesis; adenosylcobalamin biosynthesis; cob(II)yrinate a,c-diamide from sirohydrochlorin (anaerobic route): step 8/10. Functionally, catalyzes the methylation of C-15 in cobalt-precorrin-6B followed by the decarboxylation of C-12 to form cobalt-precorrin-7. The polypeptide is Cobalt-precorrin-6B C(15)-methyltransferase (decarboxylating) (cbiT) (Salmonella typhi).